A 512-amino-acid polypeptide reads, in one-letter code: ATP synthase subunit alpha (512 aa).

Position 169–176 (169–176 (GDRQTGKT)) interacts with ATP.

Belongs to the ATPase alpha/beta chains family. As to quaternary structure, F-type ATPases have 2 components, CF(1) - the catalytic core - and CF(0) - the membrane proton channel. CF(1) has five subunits: alpha(3), beta(3), gamma(1), delta(1), epsilon(1). CF(0) has three main subunits: a(1), b(2) and c(9-12). The alpha and beta chains form an alternating ring which encloses part of the gamma chain. CF(1) is attached to CF(0) by a central stalk formed by the gamma and epsilon chains, while a peripheral stalk is formed by the delta and b chains.

It localises to the cell inner membrane. It carries out the reaction ATP + H2O + 4 H(+)(in) = ADP + phosphate + 5 H(+)(out). In terms of biological role, produces ATP from ADP in the presence of a proton gradient across the membrane. The alpha chain is a regulatory subunit. This chain is ATP synthase subunit alpha, found in Rickettsia canadensis (strain McKiel).